A 368-amino-acid chain; its full sequence is tRNA 2-selenouridine synthase (368 aa).

In terms of domain architecture, Rhodanese spans 12–136 (FLGDAPLLDT…MRGFLLETIE (125 aa)). C95 functions as the S-selanylcysteine intermediate in the catalytic mechanism.

The protein belongs to the SelU family. Monomer.

The enzyme catalyses 5-methylaminomethyl-2-thiouridine(34) in tRNA + selenophosphate + (2E)-geranyl diphosphate + H2O + H(+) = 5-methylaminomethyl-2-selenouridine(34) in tRNA + (2E)-thiogeraniol + phosphate + diphosphate. The catalysed reaction is 5-methylaminomethyl-2-thiouridine(34) in tRNA + (2E)-geranyl diphosphate = 5-methylaminomethyl-S-(2E)-geranyl-thiouridine(34) in tRNA + diphosphate. It carries out the reaction 5-methylaminomethyl-S-(2E)-geranyl-thiouridine(34) in tRNA + selenophosphate + H(+) = 5-methylaminomethyl-2-(Se-phospho)selenouridine(34) in tRNA + (2E)-thiogeraniol. It catalyses the reaction 5-methylaminomethyl-2-(Se-phospho)selenouridine(34) in tRNA + H2O = 5-methylaminomethyl-2-selenouridine(34) in tRNA + phosphate. Involved in the post-transcriptional modification of the uridine at the wobble position (U34) of tRNA(Lys), tRNA(Glu) and tRNA(Gln). Catalyzes the conversion of 2-thiouridine (S2U-RNA) to 2-selenouridine (Se2U-RNA). Acts in a two-step process involving geranylation of 2-thiouridine (S2U) to S-geranyl-2-thiouridine (geS2U) and subsequent selenation of the latter derivative to 2-selenouridine (Se2U) in the tRNA chain. The chain is tRNA 2-selenouridine synthase from Bordetella bronchiseptica (strain ATCC BAA-588 / NCTC 13252 / RB50) (Alcaligenes bronchisepticus).